We begin with the raw amino-acid sequence, 115 residues long: Nucleoid-associated protein LA_4332 (115 aa).

This sequence belongs to the YbaB/EbfC family. In terms of assembly, homodimer.

Its subcellular location is the cytoplasm. It localises to the nucleoid. In terms of biological role, binds to DNA and alters its conformation. May be involved in regulation of gene expression, nucleoid organization and DNA protection. The chain is Nucleoid-associated protein LA_4332 from Leptospira interrogans serogroup Icterohaemorrhagiae serovar Lai (strain 56601).